Here is a 50-residue protein sequence, read N- to C-terminus: Large ribosomal subunit protein bL33B (50 aa).

Belongs to the bacterial ribosomal protein bL33 family.

In Streptococcus agalactiae serotype V (strain ATCC BAA-611 / 2603 V/R), this protein is Large ribosomal subunit protein bL33B.